The sequence spans 1272 residues: Presporeless protein A (1272 aa).

The Nuclear localization signal signature appears at 146-161 (KDKRIKPIDPKKKISR). 2 disordered regions span residues 369–403 (ASTINDGEEEDDDDDDNDVDGNDDDNNKEKVDDTS) and 468–490 (STSSTNTASSTRSKASSNSNQLK). Residues 374–392 (DGEEEDDDDDDNDVDGNDD) show a composition bias toward acidic residues. The segment covering 393 to 403 (DNNKEKVDDTS) has biased composition (basic and acidic residues). Positions 468–487 (STSSTNTASSTRSKASSNSN) are enriched in low complexity.

It is found in the nucleus. Functionally, functions autonomously, very early in the prespore pathway, to control prespore cell differentiation, maybe at the level of transcription. Also required for proper aggregation. This Dictyostelium discoideum (Social amoeba) protein is Presporeless protein A (pslA).